Here is a 262-residue protein sequence, read N- to C-terminus: Nickel import ATP-binding protein NikD (262 aa).

The region spanning 6–249 (LAIEGLTATT…PGHEVTRMLV (244 aa)) is the ABC transporter domain. An ATP-binding site is contributed by 42 to 49 (GASGSGKS).

It belongs to the ABC transporter superfamily. Nickel importer (TC 3.A.1.5.3) family. As to quaternary structure, the complex is composed of two ATP-binding proteins (NikD and NikE), two transmembrane proteins (NikB and NikC) and a solute-binding protein (NikA).

Its subcellular location is the cell inner membrane. It carries out the reaction Ni(2+)(out) + ATP + H2O = Ni(2+)(in) + ADP + phosphate + H(+). Its function is as follows. Part of the ABC transporter complex NikABCDE involved in nickel import. Responsible for energy coupling to the transport system. The chain is Nickel import ATP-binding protein NikD from Brucella abortus biovar 1 (strain 9-941).